The primary structure comprises 201 residues: MARYTGPRSRISRRFGEPVMGDSKALQKKNYAPGMHGRNKKRKQSEYSIQLKEKQKAKYTYGVLERQFAKTFDTAARKQGITGENLLKMLEARLDNTVYRLGIASSRRAARQLVIHKHIVVNGDVVNIPSYQLKPGDQLGVREKSKSIEAITDSLSTQSAKKFTWLEWDQSSMLGKFVTYPQREEIPENIQEQLIVELYSK.

The tract at residues 1 to 46 (MARYTGPRSRISRRFGEPVMGDSKALQKKNYAPGMHGRNKKRKQSE) is disordered. The S4 RNA-binding domain maps to 92-151 (ARLDNTVYRLGIASSRRAARQLVIHKHIVVNGDVVNIPSYQLKPGDQLGVREKSKSIEAI).

Belongs to the universal ribosomal protein uS4 family. In terms of assembly, part of the 30S ribosomal subunit. Contacts protein S5. The interaction surface between S4 and S5 is involved in control of translational fidelity.

Functionally, one of the primary rRNA binding proteins, it binds directly to 16S rRNA where it nucleates assembly of the body of the 30S subunit. With S5 and S12 plays an important role in translational accuracy. This Cytophaga hutchinsonii (strain ATCC 33406 / DSM 1761 / CIP 103989 / NBRC 15051 / NCIMB 9469 / D465) protein is Small ribosomal subunit protein uS4.